A 394-amino-acid chain; its full sequence is Acetyl-CoA acetyltransferase (394 aa).

Catalysis depends on Cys-89, which acts as the Acyl-thioester intermediate. Residues His-350 and Cys-380 each act as proton acceptor in the active site.

The protein belongs to the thiolase-like superfamily. Thiolase family. In terms of assembly, homotetramer.

The protein resides in the cytoplasm. The enzyme catalyses 2 acetyl-CoA = acetoacetyl-CoA + CoA. It functions in the pathway biopolymer metabolism; poly-(R)-3-hydroxybutanoate biosynthesis. It participates in metabolic intermediate biosynthesis; (R)-mevalonate biosynthesis; (R)-mevalonate from acetyl-CoA: step 1/3. The sequence is that of Acetyl-CoA acetyltransferase from Allochromatium vinosum (strain ATCC 17899 / DSM 180 / NBRC 103801 / NCIMB 10441 / D) (Chromatium vinosum).